Consider the following 444-residue polypeptide: ATP-dependent protease ATPase subunit HslU (444 aa).

ATP is bound by residues isoleucine 18, 60 to 65 (GVGKTE), aspartate 256, glutamate 322, and arginine 394.

The protein belongs to the ClpX chaperone family. HslU subfamily. As to quaternary structure, a double ring-shaped homohexamer of HslV is capped on each side by a ring-shaped HslU homohexamer. The assembly of the HslU/HslV complex is dependent on binding of ATP.

It is found in the cytoplasm. Functionally, ATPase subunit of a proteasome-like degradation complex; this subunit has chaperone activity. The binding of ATP and its subsequent hydrolysis by HslU are essential for unfolding of protein substrates subsequently hydrolyzed by HslV. HslU recognizes the N-terminal part of its protein substrates and unfolds these before they are guided to HslV for hydrolysis. This Serratia proteamaculans (strain 568) protein is ATP-dependent protease ATPase subunit HslU.